Reading from the N-terminus, the 272-residue chain is Shikimate dehydrogenase (NADP(+)) (272 aa).

Residues serine 14 to serine 16 and threonine 61 contribute to the shikimate site. The active-site Proton acceptor is lysine 65. Glutamate 77 contributes to the NADP(+) binding site. Positions 86 and 102 each coordinate shikimate. Residues glycine 126–alanine 130, asparagine 149–arginine 154, and methionine 213 each bind NADP(+). Tyrosine 215 is a shikimate binding site. Glycine 237 contacts NADP(+).

Belongs to the shikimate dehydrogenase family. As to quaternary structure, homodimer.

It carries out the reaction shikimate + NADP(+) = 3-dehydroshikimate + NADPH + H(+). The protein operates within metabolic intermediate biosynthesis; chorismate biosynthesis; chorismate from D-erythrose 4-phosphate and phosphoenolpyruvate: step 4/7. Functionally, involved in the biosynthesis of the chorismate, which leads to the biosynthesis of aromatic amino acids. Catalyzes the reversible NADPH linked reduction of 3-dehydroshikimate (DHSA) to yield shikimate (SA). In Escherichia coli O139:H28 (strain E24377A / ETEC), this protein is Shikimate dehydrogenase (NADP(+)).